The primary structure comprises 62 residues: Potassium channel toxin alpha-KTx Tx790 (62 aa).

Positions 1–18 (MQKLFIVLVLFCILRLDA) are cleaved as a signal peptide. 3 disulfides stabilise this stretch: Cys-28/Cys-46, Cys-33/Cys-59, and Cys-37/Cys-61.

Belongs to the short scorpion toxin superfamily. Potassium channel inhibitor family. Alpha-KTx 23 subfamily. In terms of tissue distribution, expressed by the venom gland.

It is found in the secreted. May block potassium channels. The chain is Potassium channel toxin alpha-KTx Tx790 from Buthus israelis (Israeli scorpion).